The following is a 142-amino-acid chain: Large ribosomal subunit protein bL17 (142 aa).

Belongs to the bacterial ribosomal protein bL17 family. Part of the 50S ribosomal subunit. Contacts protein L32.

In Brucella abortus (strain S19), this protein is Large ribosomal subunit protein bL17.